Here is a 444-residue protein sequence, read N- to C-terminus: Zinc finger CCCH domain-containing protein 63 (444 aa).

C3H1-type zinc fingers lie at residues 56 to 84 (RIGE…HPAD), 101 to 129 (RIGQ…HPRE), and 147 to 175 (RPNE…HPQP). Positions 251–276 (GSSSSDDQQRTAGGAQYYTGSRHSET) are disordered. C3H1-type zinc fingers lie at residues 309–337 (RPDQ…HPKE) and 355–383 (RPGE…HPMG). Residues 405 to 444 (PVPAHSEVSPDNVSGRSRRITHSDSQQIPSGERGTEREAS) form a disordered region.

The sequence is that of Zinc finger CCCH domain-containing protein 63 from Oryza sativa subsp. japonica (Rice).